The chain runs to 362 residues: 2-aminoethylphosphonate--pyruvate transaminase (362 aa).

Lys193 is subject to N6-(pyridoxal phosphate)lysine.

Belongs to the class-V pyridoxal-phosphate-dependent aminotransferase family. PhnW subfamily. As to quaternary structure, homodimer. The cofactor is pyridoxal 5'-phosphate.

The catalysed reaction is (2-aminoethyl)phosphonate + pyruvate = phosphonoacetaldehyde + L-alanine. Functionally, involved in phosphonate degradation. This is 2-aminoethylphosphonate--pyruvate transaminase from Bacteroides fragilis (strain YCH46).